We begin with the raw amino-acid sequence, 20 residues long: Protein YfiS (20 aa).

In Escherichia coli (strain K12), this protein is Protein YfiS.